The chain runs to 126 residues: Profilin-2 (126 aa).

Ser2 bears the Blocked amino end (Ser) mark. An N6,N6,N6-trimethyllysine modification is found at Lys104.

It belongs to the profilin family. In terms of assembly, occurs in many kinds of cells as a complex with monomeric actin in a 1:1 ratio.

The protein resides in the cytoplasm. It localises to the cytoskeleton. In terms of biological role, binds to actin and affects the structure of the cytoskeleton. At high concentrations, profilin prevents the polymerization of actin, whereas it enhances it at low concentrations. By binding to PIP2, it inhibits the formation of IP3 and DG. The protein is Profilin-2 of Acanthamoeba castellanii (Amoeba).